A 307-amino-acid chain; its full sequence is Furaquinocin biosynthesis prenyltransferase (307 aa).

It belongs to the aromatic prenyltransferase family. Monomer.

It catalyses the reaction 2-O,3-dimethylflaviolin + (2E)-geranyl diphosphate = 6-linalyl-2-O,3-dimethylflaviolin + diphosphate. It carries out the reaction 2-O,3-dimethylflaviolin + (2E)-geranyl diphosphate + H(+) = 7-O-geranyl-2-O,3-dimethylflaviolin + diphosphate. With respect to regulation, does not require any metal cations for activity. Involved in the biosynthesis of furaquinocin. Catalyzes the transfer of a geranyl group to 2-methoxy-3-methyl-flaviolin to yield 6-prenyl-2-methoxy-3-methyl-flaviolin and 7-O-geranyl-2-methoxy-3-methyl-flaviolin in a 10:1 ratio. Can also use other substrates such as flaviolin or 1,3-dihydroxy naphthalene, and can also use DMAPP as prenyl donor. The protein is Furaquinocin biosynthesis prenyltransferase of Streptomyces sp. (strain KO-3988).